The sequence spans 518 residues: Protein nucleotidyltransferase YdiU (518 aa).

ATP-binding residues include Gly109, Gly111, Arg112, Lys131, Asp143, Gly144, Arg194, and Arg201. The active-site Proton acceptor is the Asp270. Residues Asn271 and Asp280 each contribute to the Mg(2+) site. ATP is bound at residue Asp280.

Belongs to the SELO family. Mg(2+) serves as cofactor. Requires Mn(2+) as cofactor.

The catalysed reaction is L-seryl-[protein] + ATP = 3-O-(5'-adenylyl)-L-seryl-[protein] + diphosphate. The enzyme catalyses L-threonyl-[protein] + ATP = 3-O-(5'-adenylyl)-L-threonyl-[protein] + diphosphate. It catalyses the reaction L-tyrosyl-[protein] + ATP = O-(5'-adenylyl)-L-tyrosyl-[protein] + diphosphate. It carries out the reaction L-histidyl-[protein] + UTP = N(tele)-(5'-uridylyl)-L-histidyl-[protein] + diphosphate. The catalysed reaction is L-seryl-[protein] + UTP = O-(5'-uridylyl)-L-seryl-[protein] + diphosphate. The enzyme catalyses L-tyrosyl-[protein] + UTP = O-(5'-uridylyl)-L-tyrosyl-[protein] + diphosphate. Functionally, nucleotidyltransferase involved in the post-translational modification of proteins. It can catalyze the addition of adenosine monophosphate (AMP) or uridine monophosphate (UMP) to a protein, resulting in modifications known as AMPylation and UMPylation. The protein is Protein nucleotidyltransferase YdiU of Paraburkholderia xenovorans (strain LB400).